The primary structure comprises 234 residues: UDP-2,3-diacylglucosamine hydrolase (234 aa).

5 residues coordinate Mn(2+): D9, H11, D42, N80, and H115. A substrate-binding site is contributed by N80–R81. D123, S161, K165, K168, and H196 together coordinate substrate. Mn(2+)-binding residues include H196 and H198.

The protein belongs to the LpxH family. Requires Mn(2+) as cofactor.

The protein resides in the cell inner membrane. It catalyses the reaction UDP-2-N,3-O-bis[(3R)-3-hydroxytetradecanoyl]-alpha-D-glucosamine + H2O = 2-N,3-O-bis[(3R)-3-hydroxytetradecanoyl]-alpha-D-glucosaminyl 1-phosphate + UMP + 2 H(+). It functions in the pathway glycolipid biosynthesis; lipid IV(A) biosynthesis; lipid IV(A) from (3R)-3-hydroxytetradecanoyl-[acyl-carrier-protein] and UDP-N-acetyl-alpha-D-glucosamine: step 4/6. In terms of biological role, hydrolyzes the pyrophosphate bond of UDP-2,3-diacylglucosamine to yield 2,3-diacylglucosamine 1-phosphate (lipid X) and UMP by catalyzing the attack of water at the alpha-P atom. Involved in the biosynthesis of lipid A, a phosphorylated glycolipid that anchors the lipopolysaccharide to the outer membrane of the cell. This Haemophilus ducreyi (strain 35000HP / ATCC 700724) protein is UDP-2,3-diacylglucosamine hydrolase.